Reading from the N-terminus, the 207-residue chain is Cytidylyl-2-hydroxypropylphosphonate hydrolase (207 aa).

The CDP site is built by Trp-68, Arg-74, Gln-76, and Ser-77. A divalent metal cation-binding residues include Asn-109, Asp-125, Glu-127, and Asp-129. Lys-142 provides a ligand contact to CDP. Catalysis depends on Lys-142, which acts as the Proton donor. Asp-143 serves as a coordination point for a divalent metal cation.

Belongs to the FomD family. It depends on Mn(2+) as a cofactor. Requires Co(2+) as cofactor.

The catalysed reaction is cytidine 5'-({hydroxy[(S)-2-hydroxypropyl]phosphonoyl}phosphate) + H2O = (S)-2-hydroxypropylphosphonate + CMP + H(+). It participates in antibiotic biosynthesis; fosfomycin biosynthesis. Its activity is regulated as follows. Hydrolysis of (S)-HPP-CMP is inhibited by CDP. Its function is as follows. Involved in fosfomycin biosynthesis. Catalyzes the hydrolysis of cytidylyl (S)-2-hydroxypropylphosphonate ((S)-HPP-CMP) to give (S)-2-hydroxypropylphosphonate ((S)-HPP) and CMP. Can also hydrolyze (R)-HPP-CMP and cytidylyl 2-hydroxyethylphosphonate (HEP-CMP), which is a biosynthetic intermediate before C-methylation, but the catalytic efficiency is much higher with (S)-HPP-CMP. This chain is Cytidylyl-2-hydroxypropylphosphonate hydrolase, found in Streptomyces fradiae (Streptomyces roseoflavus).